A 201-amino-acid polypeptide reads, in one-letter code: Increased recombination centers protein 21 (201 aa).

In terms of domain architecture, Cytochrome b5 heme-binding spans proline 122–cysteine 200. Heme contacts are provided by histidine 158 and histidine 182.

Belongs to the cytochrome b5 family.

In terms of biological role, involved in resistance to carboplatin and cisplatin. Is probably involved in a pathway contributing to genomic integrity. This is Increased recombination centers protein 21 (IRC21) from Saccharomyces cerevisiae (strain ATCC 204508 / S288c) (Baker's yeast).